The chain runs to 393 residues: Decapping nuclease dom-3 (393 aa).

Residues M1 to L37 are disordered. The segment covering G17–H28 has biased composition (basic and acidic residues). Residues R74, E113, and W144 to G146 contribute to the substrate site. E205, E257, D259, E269, and L270 together coordinate Mg(2+). Residue E257 coordinates substrate. Positions 271 and 293 each coordinate substrate.

Belongs to the DXO/Dom3Z family. Requires Mg(2+) as cofactor.

The enzyme catalyses a 5'-end NAD(+)-phospho-ribonucleoside in mRNA + H2O = a 5'-end phospho-ribonucleoside in mRNA + NAD(+) + H(+). The catalysed reaction is a 5'-end (N(7)-methyl 5'-triphosphoguanosine)-ribonucleoside-ribonucleotide in mRNA + H2O = a (N(7)-methyl 5'-triphosphoguanosine)-nucleoside + a 5'-end phospho-ribonucleoside in mRNA + H(+). It catalyses the reaction a 5'-end triphospho-ribonucleoside in mRNA + H2O = a 5'-end phospho-ribonucleoside in mRNA + diphosphate + H(+). Functionally, decapping enzyme for NAD-capped RNAs: specifically hydrolyzes the nicotinamide adenine dinucleotide (NAD) cap from a subset of RNAs by removing the entire NAD moiety from the 5'-end of an NAD-capped RNA. The NAD-cap is present at the 5'-end of some RNAs and snoRNAs. In contrast to the canonical 5'-end N7 methylguanosine (m7G) cap, the NAD cap promotes mRNA decay. Also acts as a non-canonical decapping enzyme that removes the entire cap structure of m7G capped or incompletely capped RNAs and mediates their subsequent degradation. Specifically degrades pre-mRNAs with a defective 5'-end m7G cap and is part of a pre-mRNA capping quality control. Also possesses RNA 5'-pyrophosphohydrolase activity by hydrolyzing the 5'-end triphosphate to release pyrophosphates. The protein is Decapping nuclease dom-3 of Caenorhabditis elegans.